Consider the following 180-residue polypeptide: ATP synthase subunit delta (180 aa).

The protein belongs to the ATPase delta chain family. F-type ATPases have 2 components, F(1) - the catalytic core - and F(0) - the membrane proton channel. F(1) has five subunits: alpha(3), beta(3), gamma(1), delta(1), epsilon(1). F(0) has three main subunits: a(1), b(2) and c(10-14). The alpha and beta chains form an alternating ring which encloses part of the gamma chain. F(1) is attached to F(0) by a central stalk formed by the gamma and epsilon chains, while a peripheral stalk is formed by the delta and b chains.

It is found in the cell inner membrane. Its function is as follows. F(1)F(0) ATP synthase produces ATP from ADP in the presence of a proton or sodium gradient. F-type ATPases consist of two structural domains, F(1) containing the extramembraneous catalytic core and F(0) containing the membrane proton channel, linked together by a central stalk and a peripheral stalk. During catalysis, ATP synthesis in the catalytic domain of F(1) is coupled via a rotary mechanism of the central stalk subunits to proton translocation. In terms of biological role, this protein is part of the stalk that links CF(0) to CF(1). It either transmits conformational changes from CF(0) to CF(1) or is implicated in proton conduction. This Paracidovorax citrulli (strain AAC00-1) (Acidovorax citrulli) protein is ATP synthase subunit delta.